Consider the following 206-residue polypeptide: Ribonuclease HII (206 aa).

The region spanning 14–206 (EFICGIDEVG…FKLRQLGEKV (193 aa)) is the RNase H type-2 domain. A divalent metal cation contacts are provided by D20, E21, and D117.

It belongs to the RNase HII family. The cofactor is Mn(2+). It depends on Mg(2+) as a cofactor.

It localises to the cytoplasm. It carries out the reaction Endonucleolytic cleavage to 5'-phosphomonoester.. Its function is as follows. Endonuclease that specifically degrades the RNA of RNA-DNA hybrids. The chain is Ribonuclease HII from Chlorobium chlorochromatii (strain CaD3).